The primary structure comprises 382 residues: MTASIGKTNLLGLTQPEMEKFFDSIGEKRFRAGQVMKWIHHFGVDDFDAMTNVGKALREKLKAVAEIRGPEVVSEDISSDGTRKWVVRVASGSCVETVYIPQGKRGTLCVSSQAGCALDCSFCSTGKQGFNSNLTAAEVIGQVWIANKSFGSVPATVDRAITNVVMMGMGEPLLNFDNVIAAMHLMMDDLGYGISKRRVTLSTSGVVPMIDELAKHIDVSLALSLHAPNDALRNQLVPINKKYPLKMLLESCQRYMSALGEKRVLTIEYTLLKDVNDKLEHAVEMIELLKDVPCKINLIPFNPFPHSGYERPSNNAIRRFQDQLHHAGFNVTVRTTRGEDIDAACGQLVGQVLDRTRRSERYIAVRELSADADMPQSAATRT.

The Proton acceptor role is filled by glutamate 96. The region spanning 102-342 (QGKRGTLCVS…VRTTRGEDID (241 aa)) is the Radical SAM core domain. A disulfide bridge connects residues cysteine 109 and cysteine 345. The [4Fe-4S] cluster site is built by cysteine 116, cysteine 120, and cysteine 123. Residues 170-171 (GE), serine 202, 224-226 (SLH), and asparagine 302 each bind S-adenosyl-L-methionine. Residue cysteine 345 is the S-methylcysteine intermediate of the active site.

This sequence belongs to the radical SAM superfamily. RlmN family. Requires [4Fe-4S] cluster as cofactor.

Its subcellular location is the cytoplasm. It catalyses the reaction adenosine(2503) in 23S rRNA + 2 reduced [2Fe-2S]-[ferredoxin] + 2 S-adenosyl-L-methionine = 2-methyladenosine(2503) in 23S rRNA + 5'-deoxyadenosine + L-methionine + 2 oxidized [2Fe-2S]-[ferredoxin] + S-adenosyl-L-homocysteine. The catalysed reaction is adenosine(37) in tRNA + 2 reduced [2Fe-2S]-[ferredoxin] + 2 S-adenosyl-L-methionine = 2-methyladenosine(37) in tRNA + 5'-deoxyadenosine + L-methionine + 2 oxidized [2Fe-2S]-[ferredoxin] + S-adenosyl-L-homocysteine. Functionally, specifically methylates position 2 of adenine 2503 in 23S rRNA and position 2 of adenine 37 in tRNAs. m2A2503 modification seems to play a crucial role in the proofreading step occurring at the peptidyl transferase center and thus would serve to optimize ribosomal fidelity. The polypeptide is Dual-specificity RNA methyltransferase RlmN (Pseudomonas fluorescens (strain ATCC BAA-477 / NRRL B-23932 / Pf-5)).